The primary structure comprises 396 residues: Elongation factor Tu (396 aa).

Residues 10–206 enclose the tr-type G domain; the sequence is KPHCNIGTIG…AVDAYIPQPE (197 aa). Residues 19 to 26 are G1; the sequence is GHVDHGKT. Residue 19–26 coordinates GTP; it reads GHVDHGKT. Residue Thr-26 coordinates Mg(2+). Residues 60–64 form a G2 region; sequence GITIS. Residues 81–84 form a G3 region; sequence DCPG. GTP contacts are provided by residues 81 to 85 and 136 to 139; these read DCPGH and NKCD. Positions 136–139 are G4; the sequence is NKCD. Residues 174 to 176 form a G5 region; sequence SAL.

It belongs to the TRAFAC class translation factor GTPase superfamily. Classic translation factor GTPase family. EF-Tu/EF-1A subfamily. As to quaternary structure, monomer.

It localises to the cytoplasm. The enzyme catalyses GTP + H2O = GDP + phosphate + H(+). In terms of biological role, GTP hydrolase that promotes the GTP-dependent binding of aminoacyl-tRNA to the A-site of ribosomes during protein biosynthesis. This chain is Elongation factor Tu, found in Rhodopseudomonas palustris (strain HaA2).